The sequence spans 364 residues: N-alpha-acetyltransferase 30 (364 aa).

Residues 1 to 18 (MAEVPPGPSSLLPPPAPA) are compositionally biased toward pro residues. Disordered regions lie at residues 1–21 (MAEV…AAPA), 39–65 (SEDE…TSAK), and 110–164 (EAAA…SDPA). Phosphoserine is present on residues serine 39 and serine 54. Positions 39-48 (SEDEEDDEEH) are enriched in acidic residues. Basic and acidic residues predominate over residues 126–135 (AEGHPGERPP). Residues 152-164 (AAAAAAGAASDPA) show a composition bias toward low complexity. A phosphoserine mark is found at serine 192, serine 198, and serine 201. The 149-residue stretch at 216-364 (RYVRYESELQ…DALRLKLWLR (149 aa)) folds into the N-acetyltransferase domain. N6-acetyllysine is present on lysine 235.

Belongs to the acetyltransferase family. MAK3 subfamily. Component of the N-terminal acetyltransferase C (NatC) complex, which is composed of NAA35, NAA38 and NAA30.

It localises to the cytoplasm. The protein localises to the nucleus. It carries out the reaction N-terminal L-methionyl-L-leucyl-[protein] + acetyl-CoA = N-terminal N(alpha)-acetyl-L-methionyl-L-leucyl-[protein] + CoA + H(+). The enzyme catalyses N-terminal L-methionyl-L-isoleucyl-[protein] + acetyl-CoA = N-terminal N(alpha)-acetyl-L-methionyl-L-isoleucyl-[protein] + CoA + H(+). It catalyses the reaction N-terminal L-methionyl-L-phenylalanyl-[protein] + acetyl-CoA = N-terminal N(alpha)-acetyl-L-methionyl-L-phenylalanyl-[protein] + CoA + H(+). The catalysed reaction is N-terminal L-methionyl-L-tryptophyl-[protein] + acetyl-CoA = N-terminal N(alpha)-acetyl-L-methionyl-L-tryptophyl-[protein] + CoA + H(+). It carries out the reaction N-terminal L-methionyl-L-tyrosyl-[protein] + acetyl-CoA = N-terminal N(alpha)-acetyl-L-methionyl-L-tyrosyl-[protein] + CoA + H(+). Catalytic subunit of the N-terminal acetyltransferase C (NatC) complex. Catalyzes acetylation of the N-terminal methionine residues of peptides beginning with Met-Leu-Ala and Met-Leu-Gly. N-terminal acetylation protects proteins from ubiquitination and degradation by the N-end rule pathway. Necessary for the lysosomal localization and function of ARL8B sugeesting that ARL8B is a NatC substrate. This Mus musculus (Mouse) protein is N-alpha-acetyltransferase 30 (Naa30).